A 217-amino-acid polypeptide reads, in one-letter code: Protein TNT (217 aa).

A disordered region spans residues Met-1–Glu-217. Composition is skewed to polar residues over residues Ser-20–Ser-36 and Thr-45–Pro-61. Composition is skewed to low complexity over residues Glu-91 to Pro-104 and Gln-128 to His-139. Polar residues-rich tracts occupy residues Arg-177–Gly-191 and Ala-207–Glu-217.

In terms of tissue distribution, preferentially expressed in teratocarcinoma rather than in normal testis.

The sequence is that of Protein TNT (C16orf82) from Homo sapiens (Human).